The chain runs to 202 residues: Complement component C8 gamma chain (202 aa).

A signal peptide spans 1 to 20 (MLPPGTATLLTLLLAAGSLG). Gln-21 carries the pyrrolidone carboxylic acid modification. Cys-96 and Cys-188 are disulfide-bonded.

It belongs to the calycin superfamily. Lipocalin family. Heterotrimer of 3 chains: alpha (C8A), beta (C8B) and gamma (C8G); the alpha and gamma chains are disulfide bonded. Component of the membrane attack complex (MAC), composed of complement C5b, C6, C7, C8A, C8B, C8G and multiple copies of the pore-forming subunit C9.

Its subcellular location is the secreted. The protein localises to the target cell membrane. With respect to regulation, membrane attack complex (MAC) assembly is inhibited by CD59, thereby protecting self-cells from damage during complement activation. MAC assembly is also inhibited by clusterin (CLU) chaperones that inhibit polymerization of C9. Its function is as follows. Component of the membrane attack complex (MAC), a multiprotein complex activated by the complement cascade, which inserts into a target cell membrane and forms a pore, leading to target cell membrane rupture and cell lysis. The MAC is initiated by proteolytic cleavage of C5 into complement C5b in response to the classical, alternative, lectin and GZMK complement pathways. The complement pathways consist in a cascade of proteins that leads to phagocytosis and breakdown of pathogens and signaling that strengthens the adaptive immune system. C8G, together with C8A and C8B, inserts into the target membrane, but does not form pores by itself. During MAC assembly, associates with C5b, C6 and C7 to form the C5b8 intermediate complex that inserts into the target membrane and traverses the bilayer increasing membrane rigidity. The chain is Complement component C8 gamma chain from Homo sapiens (Human).